Consider the following 274-residue polypeptide: Triosephosphate isomerase (274 aa).

Substrate is bound at residue 31-33; the sequence is NWK. The active-site Electrophile is histidine 118. Glutamate 188 serves as the catalytic Proton acceptor. Residues glycine 194, serine 234, and 255 to 256 each bind substrate; that span reads GG.

The protein belongs to the triosephosphate isomerase family. In terms of assembly, homodimer.

It localises to the cytoplasm. It carries out the reaction D-glyceraldehyde 3-phosphate = dihydroxyacetone phosphate. It participates in carbohydrate biosynthesis; gluconeogenesis. It functions in the pathway carbohydrate degradation; glycolysis; D-glyceraldehyde 3-phosphate from glycerone phosphate: step 1/1. Functionally, involved in the gluconeogenesis. Catalyzes stereospecifically the conversion of dihydroxyacetone phosphate (DHAP) to D-glyceraldehyde-3-phosphate (G3P). The chain is Triosephosphate isomerase from Chlamydia trachomatis serovar D (strain ATCC VR-885 / DSM 19411 / UW-3/Cx).